The chain runs to 420 residues: ATP phosphoribosyltransferase regulatory subunit (420 aa).

This sequence belongs to the class-II aminoacyl-tRNA synthetase family. HisZ subfamily. As to quaternary structure, heteromultimer composed of HisG and HisZ subunits.

Its subcellular location is the cytoplasm. It functions in the pathway amino-acid biosynthesis; L-histidine biosynthesis; L-histidine from 5-phospho-alpha-D-ribose 1-diphosphate: step 1/9. Required for the first step of histidine biosynthesis. May allow the feedback regulation of ATP phosphoribosyltransferase activity by histidine. The chain is ATP phosphoribosyltransferase regulatory subunit from Bacillus cereus (strain B4264).